We begin with the raw amino-acid sequence, 693 residues long: MSAREPAGRRRRASTRPRASPVADEPAGDGVGFMGYLRAVFRGDDDSELEALEEMAGDEPPVRRRREGPRARRRRASEAPPTSHRRASRQRPGPDAARSQSVRGRLDDDDEVPRGPPQARQGGYLGPVDARAILGRVGGSRVAPSPLFLEELQYEEDDYPEDVGPEDGGGARSPPKVEVLEGRVPGPELRAAFPLDRLAPQVAVWDESVRSALALGHPAGFYPCPDSAFGLSRVGVMHFASPDNPAVFFRQTLQQGEALAWYITGDGILDLTDRRTKTSPAQAMSFLADAVVRLAINGWVCGTRLHAEARGSDLDDRAAELRRQFASLTALRPVGAAAVPLLSAGGLVSPQSGPDAAVFRSSLGSLLYWPGVRALLDRDCRVAARYAGRMTYLATGALLARFNPDAVRCVLTREAAFLGRVLDVLAVMAEQTVHWLSVVVGARLHPHVHHPAFADVAREELFRALPLGSPAVVGAEHEALGDTAARRLLANSGLNAVLGAAVYALHTALATVTLKYARACGDAHRRRDDAAATRRILAAGLVLQRLLGFADTVVACVTLAAFDGGFTAPEVGTYTPLRYACVLRATQPLYARTTPAKFWADVRAAAEHVDLRPASSAPRAPVSGTADPAFLLKDLEPFPPAPVSGGSVLGPGVRVVDIMSQFRKLLMGDEGAAALRAHVSGRRATGLGGPPRP.

Disordered stretches follow at residues 1–32 and 48–126; these read MSAR…DGVG and ELEA…GYLG. The span at 48–57 shows a compositional bias: acidic residues; that stretch reads ELEALEEMAG. The tract at residues 50 to 75 is RNA-binding; the sequence is EALEEMAGDEPPVRRRREGPRARRRR. A Nuclear localization signal motif is present at residues 63 to 75; sequence RRRREGPRARRRR. A compositionally biased stretch (basic residues) spans 63-75; that stretch reads RRRREGPRARRRR. The Nuclear export signal signature appears at 647–670; sequence SVLGPGVRVVDIMSQFRKLLMGDE.

The protein belongs to the alphaherpesvirinae HHV-1 UL47 family. In terms of assembly, interacts with US3 kinase. Interacts with UL31 and UL34; these interactions seem important for efficient virion nuclear egress. Interacts with UL41/VHS. Post-translationally, phosphorylated by US3. This phosphorylation is required for proper nuclear localization.

Its subcellular location is the virion tegument. The protein localises to the host nucleus. The protein resides in the host cytoplasm. In terms of biological role, tegument protein that can bind to various RNA transcripts. Plays a role in the attenuation of selective viral and cellular mRNA degradation by modulating the activity of host shutoff RNase UL41/VHS. Also plays a role in the primary envelopment of virions in the perinuclear space, probably by interacting with two nuclear egress proteins UL31 and UL34. The sequence is that of Tegument protein UL47 from Human herpesvirus 1 (strain F) (HHV-1).